Here is an 852-residue protein sequence, read N- to C-terminus: GPI ethanolamine phosphate transferase 2 (852 aa).

Asn-191 and Asn-420 each carry an N-linked (GlcNAc...) asparagine glycan. 3 consecutive transmembrane segments (helical) span residues Leu-458–Pro-478, Phe-486–Ala-506, and Phe-516–Phe-536. Asn-576 carries N-linked (GlcNAc...) asparagine glycosylation. Transmembrane regions (helical) follow at residues Leu-632–Tyr-652, Thr-676–Phe-696, Thr-714–Ile-734, Ser-750–Val-770, Ala-787–Cys-807, and Tyr-824–Ile-844.

It belongs to the PIGG/PIGN/PIGO family. PIGG subfamily.

Its subcellular location is the endoplasmic reticulum membrane. It functions in the pathway glycolipid biosynthesis; glycosylphosphatidylinositol-anchor biosynthesis. Functionally, ethanolamine phosphate transferase involved in glycosylphosphatidylinositol-anchor biosynthesis. Transfers ethanolamine phosphate to the GPI second mannose. This Aspergillus oryzae (strain ATCC 42149 / RIB 40) (Yellow koji mold) protein is GPI ethanolamine phosphate transferase 2 (las21).